Consider the following 638-residue polypeptide: MGKIIGIDLGTTNSCVAVLDGDKPRVIENAEGERTTASVVAYTDGETLVGQPAKRQAVTNPTNTLFAIKRLIGRRFEDEEVQRDIEIMPYKIVKADNGDAWVEAQGQKMAAPQVSAEILKKMKKTAEDFLGEEVTGAVITVPAYFNDAQRQATKDAGRIAGLEVKRIINEPTAAALAYGLDKSGGDRTIAVYDLGGGTFDISIIEIDEVEGEKTFEVLATNGDTHLGGEDFDTRLINYLVDEFNKEQGINLKNDPLAMQRVKEAAEKAKIELSSTSQTDVNLPYVTADATGPKHMNVKVTRAKLESLVEDLVQRSLEPLKVALADADLSVNDITDVILVGGQTRMPMVQAKVAEFFGKEARRDVNPDEAVAMGAAVQGGVLAGDVKDVLLLDVTPLSLGIETMGGVMTKLVEKNTTIPTKANQVFSTAEDNQSAVTIHVLQGERKQASFNKSLGQFNLEGIQAAPRGMPQIEVTFDLDADGILHVSAKDKQTGKEQKITIQASGGLSDEDIEKMVQEAEANKEADKKFEELAAARNQADQMIHGTRKQVEEAGEALPAEEKEKIEAAISELETARKGDDKEAIDAKVQALMTAAQKLMEIAQQQAQAQQAQGADADAQQSKEDDVVDAEFEEVKDDKK.

Phosphothreonine; by autocatalysis is present on Thr-198. The span at 603 to 618 shows a compositional bias: low complexity; sequence QQAQAQQAQGADADAQ. Positions 603 to 638 are disordered; it reads QQAQAQQAQGADADAQQSKEDDVVDAEFEEVKDDKK. Residues 624–638 are compositionally biased toward acidic residues; sequence DVVDAEFEEVKDDKK.

The protein belongs to the heat shock protein 70 family.

Functionally, acts as a chaperone. The chain is Chaperone protein DnaK from Vibrio campbellii (strain ATCC BAA-1116).